The sequence spans 211 residues: MRDIVIIGHKAKTSGDFSLNDLPGSAGRMDILCRCVSSALFLSFGMRRDVNVHLLLLGEPEPGKIIRFEGLHLRYLNPDERSSGSLIQKALQKTVTEKDIRSTPGVWVRNGDLNTLLASFEGRTLFYLREDGEDIRGLDREIRDPVFILGDHMGVTEEEEKQLLEAGAKIISVGPISLHSNHCITLLHNELDRAEAERGEIPGGEKLRAGE.

The S-adenosyl-L-methionine site is built by leucine 128, glycine 150, and cysteine 183.

Belongs to the methyltransferase superfamily. TrmY family. In terms of assembly, homodimer.

The protein localises to the cytoplasm. The enzyme catalyses pseudouridine(54) in tRNA + S-adenosyl-L-methionine = N(1)-methylpseudouridine(54) in tRNA + S-adenosyl-L-homocysteine + H(+). Its function is as follows. Specifically catalyzes the N1-methylation of pseudouridine at position 54 (Psi54) in tRNAs. The polypeptide is tRNA (pseudouridine(54)-N(1))-methyltransferase (Methanosarcina acetivorans (strain ATCC 35395 / DSM 2834 / JCM 12185 / C2A)).